The primary structure comprises 310 residues: Protein YIP5 (310 aa).

The segment at 1–84 (MPSNNSSFLD…VIGQNDNDGL (84 aa)) is disordered. The span at 10 to 22 (DIDDDLEGVDDFG) shows a compositional bias: acidic residues. Residues 35-57 (DSPNMNNSTAGKGSEFYNTTGSK) show a composition bias toward polar residues. Ser-60 is modified (phosphoserine). The next 5 membrane-spanning stretches (helical) occupy residues 131–151 (TDLY…FTMS), 181–201 (LHSI…TMQV), 220–240 (LISV…ILNI), 249–269 (TVQA…SYFL), and 290–310 (SIIV…FIIF).

Belongs to the YIP1 family. Interacts with SNX3, TVP18, TVP23, YIP1 and YIP4. Interacts with SEC4; The C-terminal cysteines in the Rab GTPase SEC4 are essential for the interaction. Interacts with YPT1, YPT6, YPT7, YPT10, YPT11, YPT31, YPT32 and YPT52; These proteins are all Rab GTPases.

It localises to the membrane. Its function is as follows. Possible role in vesicle-mediated transport. May be involved in proper membrane localization of Rab GTPases. This Saccharomyces cerevisiae (strain ATCC 204508 / S288c) (Baker's yeast) protein is Protein YIP5 (YIP5).